We begin with the raw amino-acid sequence, 624 residues long: Actin-related protein 8 (624 aa).

An N-acetylmethionine modification is found at M1. Residues 1–25 (MTQAEKGEAENGKEKGGEKEKEQRG) are compositionally biased toward basic and acidic residues. A disordered region spans residues 1-29 (MTQAEKGEAENGKEKGGEKEKEQRGVKRP). Residues S55 and T56 each coordinate ATP. The residue at position 132 (S132) is a Phosphoserine. 283-286 (DVGD) lines the ATP pocket. S412 bears the Phosphoserine mark. Residues 430–462 (SKQEQSAKATADRKSASKPIGFEGDLRGQSSDL) are disordered.

It belongs to the actin family. ARP8 subfamily. In terms of assembly, component of the chromatin remodeling INO80 complex; specifically part of a complex module associated with the DBINO domain of INO80. Exists as monomers and dimers, but the dimer is most probably the biologically relevant form required for stable interactions with histones that exploits the twofold symmetry of the nucleosome core.

The protein localises to the nucleus. It is found in the chromosome. In terms of biological role, plays an important role in the functional organization of mitotic chromosomes. Exhibits low basal ATPase activity, and unable to polymerize. Its function is as follows. Proposed core component of the chromatin remodeling INO80 complex which is involved in transcriptional regulation, DNA replication and probably DNA repair. Required for the recruitment of INO80 (and probably the INO80 complex) to sites of DNA damage Strongly prefer nucleosomes and H3-H4 tetramers over H2A-H2B dimers, suggesting it may act as a nucleosome recognition module within the complex. The chain is Actin-related protein 8 (ACTR8) from Bos taurus (Bovine).